The sequence spans 259 residues: UPF0246 protein RD1_0358 (259 aa).

The protein belongs to the UPF0246 family.

The protein is UPF0246 protein RD1_0358 of Roseobacter denitrificans (strain ATCC 33942 / OCh 114) (Erythrobacter sp. (strain OCh 114)).